Here is a 286-residue protein sequence, read N- to C-terminus: Flagellar filament 31.3 kDa core protein (286 aa).

This sequence belongs to the bacterial flagellin family. The core of the flagellum consists of several antigenically related polypeptides. In terms of processing, glycosylated. Glycosylation is not essential for motility.

The protein localises to the periplasmic flagellum. Its subcellular location is the periplasm. In terms of biological role, component of the core of the flagella. The polypeptide is Flagellar filament 31.3 kDa core protein (flaB2) (Treponema maltophilum).